We begin with the raw amino-acid sequence, 447 residues long: Ribosomal protein uS12 methylthiotransferase RimO (447 aa).

The MTTase N-terminal domain occupies 6 to 122; the sequence is EKVSMVSLGC…IAEIIEEKSS (117 aa). Positions 15, 51, 85, 160, 164, and 167 each coordinate [4Fe-4S] cluster. A Radical SAM core domain is found at 146-376; it reads SSPAYTAYLK…MKAQARVSFK (231 aa). In terms of domain architecture, TRAM spans 379–447; it reads RRLIDTEEQV…DYDLIGEIIS (69 aa).

It belongs to the methylthiotransferase family. RimO subfamily. It depends on [4Fe-4S] cluster as a cofactor.

It is found in the cytoplasm. It carries out the reaction L-aspartate(89)-[ribosomal protein uS12]-hydrogen + (sulfur carrier)-SH + AH2 + 2 S-adenosyl-L-methionine = 3-methylsulfanyl-L-aspartate(89)-[ribosomal protein uS12]-hydrogen + (sulfur carrier)-H + 5'-deoxyadenosine + L-methionine + A + S-adenosyl-L-homocysteine + 2 H(+). In terms of biological role, catalyzes the methylthiolation of an aspartic acid residue of ribosomal protein uS12. This is Ribosomal protein uS12 methylthiotransferase RimO from Geobacter sulfurreducens (strain ATCC 51573 / DSM 12127 / PCA).